Reading from the N-terminus, the 937-residue chain is Translation initiation factor IF-2 (937 aa).

Disordered stretches follow at residues 61–156 (IQAN…KAKQ) and 171–274 (LTQS…SHKI). Basic and acidic residues predominate over residues 179 to 196 (AKKEISEVKKQEQEIKRH). The segment covering 197 to 208 (ENIKRRTGFRVI) has biased composition (basic residues). Over residues 237–252 (EDIKKEWQEKDKQEAK) the composition is skewed to basic and acidic residues. One can recognise a tr-type G domain in the interval 436 to 605 (ERPPVVTIMG…LIQADIMELK (170 aa)). A G1 region spans residues 445–452 (GHVDHGKT). 445-452 (GHVDHGKT) is a GTP binding site. The segment at 470–474 (GITQH) is G2. The tract at residues 491 to 494 (DTPG) is G3. GTP-binding positions include 491–495 (DTPGH) and 545–548 (NKMD). The tract at residues 545–548 (NKMD) is G4. The tract at residues 581–583 (SAK) is G5.

This sequence belongs to the TRAFAC class translation factor GTPase superfamily. Classic translation factor GTPase family. IF-2 subfamily.

It localises to the cytoplasm. Its function is as follows. One of the essential components for the initiation of protein synthesis. Protects formylmethionyl-tRNA from spontaneous hydrolysis and promotes its binding to the 30S ribosomal subunits. Also involved in the hydrolysis of GTP during the formation of the 70S ribosomal complex. This chain is Translation initiation factor IF-2, found in Helicobacter pylori (strain G27).